The primary structure comprises 279 residues: UTP--glucose-1-phosphate uridylyltransferase (279 aa).

Belongs to the UDPGP type 2 family.

The enzyme catalyses alpha-D-glucose 1-phosphate + UTP + H(+) = UDP-alpha-D-glucose + diphosphate. May play a role in stationary phase survival. The chain is UTP--glucose-1-phosphate uridylyltransferase (galU) from Pseudomonas aeruginosa (strain ATCC 15692 / DSM 22644 / CIP 104116 / JCM 14847 / LMG 12228 / 1C / PRS 101 / PAO1).